The following is a 90-amino-acid chain: Conotoxin Vc22.1 (90 aa).

The N-terminal stretch at 1–18 (MMTRVFLAMFFLLVLTKG) is a signal peptide.

It belongs to the E superfamily. In terms of processing, contains 4 disulfide bonds. Expressed by the venom duct.

Its subcellular location is the secreted. The sequence is that of Conotoxin Vc22.1 from Conus victoriae (Queen Victoria cone).